Here is a 1137-residue protein sequence, read N- to C-terminus: Bone sialoprotein-binding protein (1137 aa).

The first 52 residues, 1–52 (MINRDNKKAITKKGMISNRLNKFSIRKYTVGTASILVGTTLIFGLGNQEAKA), serve as a signal peptide directing secretion. The segment at 53–601 (AENTSTENAK…GDGTVKPEEK (549 aa)) is ligand binding A region. Disordered regions lie at residues 54–249 (ENTS…TAPT) and 675–697 (LPTK…VTVK). A compositionally biased stretch (basic and acidic residues) spans 61–75 (AKQDEASASDNKEVV). Residues 77–89 (ETENNSTQKNDLT) are compositionally biased toward polar residues. A compositionally biased stretch (basic and acidic residues) spans 92–106 (IKKETNTDSHQEAKE). Low complexity predominate over residues 109–126 (TTSSTQQQQNNATTSTET). Residues 130-145 (NIEKENVKPSTDKTAT) are compositionally biased toward basic and acidic residues. The segment covering 158–207 (PNNTNNDVTTKPSTSEIQTTPTTPQESTNIENSQPQPTPSKVDNQVTDAT) has biased composition (polar residues). Over residues 216 to 241 (SKEELKNNPEKLKELVRNDSNTDRST) the composition is skewed to basic and acidic residues. 3 CNA-B domains span residues 602-714 (LYKI…YKEP), 715-824 (KYNL…YKTP), and 825-935 (KYSL…EEDT). Residues 896 to 1112 (TQTGTNTTED…TGSENNGSNN (217 aa)) are disordered. Composition is skewed to acidic residues over residues 903–913 (TEDDKDADGGE) and 930–1076 (YFEE…DSDS). The LPXTG sorting signal motif lies at 1100–1104 (LPETG). Thr1103 carries the pentaglycyl murein peptidoglycan amidated threonine modification. Positions 1104–1137 (GSENNGSNNATLFGGLFAALGSLLLFGRRKKQNK) are cleaved as a propeptide — removed by sortase.

It belongs to the serine-aspartate repeat-containing protein (SDr) family.

It localises to the secreted. Its subcellular location is the cell wall. Specifically interacts with bone sialoprotein (BSP), a glycoprotein of bone and dentin extracellular matrix. Could contribute to staphylococcal osteomyelitis and arthritis. The polypeptide is Bone sialoprotein-binding protein (bbp) (Staphylococcus aureus (strain MRSA252)).